Here is a 264-residue protein sequence, read N- to C-terminus: Proteasome subunit alpha type-4 (264 aa).

The protein belongs to the peptidase T1A family. The 26S proteasome consists of a 20S proteasome core and two 19S regulatory subunits. The 20S proteasome core is composed of 28 subunits that are arranged in four stacked rings, resulting in a barrel-shaped structure. The two end rings are each formed by seven alpha subunits, and the two central rings are each formed by seven beta subunits. The catalytic chamber with the active sites is on the inside of the barrel. Interacts with PI31.

The protein localises to the cytoplasm. Its subcellular location is the nucleus. In terms of biological role, the proteasome is a multicatalytic proteinase complex which is characterized by its ability to cleave peptides with Arg, Phe, Tyr, Leu, and Glu adjacent to the leaving group at neutral or slightly basic pH. The proteasome has an ATP-dependent proteolytic activity. This is Proteasome subunit alpha type-4 (Prosalpha3) from Drosophila melanogaster (Fruit fly).